Consider the following 505-residue polypeptide: MTTMNISTLRLDSNPITTSTKSTTHRSGALGYNGSYSCRLLQFQKKNKAPSIIVCSTKPLASVVEHQGVNDSGLTRIESLSQVSGVLGCQWGDEGKGKLVDILAKHFDIVARCQGGANAGHTIYNSEGKKFALHLVPSGILNEETICVIGNGVVVHLPGLFKEIDNLESNGVSCQGRILVSDRAHLLFDFHQEVDGLREAELAKSFIGTTKRGIGPCYSSKVIRNGIRVSDLRHMDTFPQQLDLLLSDAASRFQGFNYGRDMLKEEVERYKKFAERLEPFITDTVHFMNDAISQKKKILVEGGQATMLDIDFGTYPFVTSSSPSAGGICTGLGIAPRVVGDLVGVVKAYTTRVGSGPFPTEIMGKGGDLLRFAGQEFGTTTGRPRRCGWLDIVALRFCCQINGFASLNLTKLDVLSDLSEIQLGVTYRHPDGSTLNSFPSDIRLLEQIKVEYEVMPGWQSDISSVRKYSDLPKAAREYVERIEELVGVPVHYIGVGPGRDALIYK.

The transit peptide at 1–60 (MTTMNISTLRLDSNPITTSTKSTTHRSGALGYNGSYSCRLLQFQKKNKAPSIIVCSTKPL) directs the protein to the chloroplast. GTP contacts are provided by residues 92–98 (GDEGKGK) and 120–122 (GHT). Asp-93 acts as the Proton acceptor in catalysis. The Mg(2+) site is built by Asp-93 and Gly-120. IMP-binding positions include 93–96 (DEGK), 118–121 (NAGH), Thr-210, Arg-224, Gln-304, Thr-319, and Arg-383. His-121 (proton donor) is an active-site residue. 379–385 (TTTGRPR) contributes to the substrate binding site. Residues Arg-385, 411–413 (KLD), and 494–496 (GVG) contribute to the GTP site.

This sequence belongs to the adenylosuccinate synthetase family. Homodimer. The cofactor is Mg(2+).

It is found in the plastid. It localises to the chloroplast. The catalysed reaction is IMP + L-aspartate + GTP = N(6)-(1,2-dicarboxyethyl)-AMP + GDP + phosphate + 2 H(+). Its pathway is purine metabolism; AMP biosynthesis via de novo pathway; AMP from IMP: step 1/2. Functionally, plays an important role in the de novo pathway and in the salvage pathway of purine nucleotide biosynthesis. Catalyzes the first committed step in the biosynthesis of AMP from IMP. This is Adenylosuccinate synthetase, chloroplastic from Nicotiana tabacum (Common tobacco).